We begin with the raw amino-acid sequence, 188 residues long: Elongation factor P (188 aa).

Belongs to the elongation factor P family.

The protein resides in the cytoplasm. The protein operates within protein biosynthesis; polypeptide chain elongation. Its function is as follows. Involved in peptide bond synthesis. Stimulates efficient translation and peptide-bond synthesis on native or reconstituted 70S ribosomes in vitro. Probably functions indirectly by altering the affinity of the ribosome for aminoacyl-tRNA, thus increasing their reactivity as acceptors for peptidyl transferase. In Wolbachia pipientis subsp. Culex pipiens (strain wPip), this protein is Elongation factor P.